The sequence spans 269 residues: Small ribosomal subunit protein uS2 (269 aa).

The tract at residues Ala228–Ala269 is disordered. The span at Gln233–Thr244 shows a compositional bias: low complexity. Over residues Gly245 to Ala269 the composition is skewed to basic and acidic residues.

The protein belongs to the universal ribosomal protein uS2 family.

The chain is Small ribosomal subunit protein uS2 from Corynebacterium urealyticum (strain ATCC 43042 / DSM 7109).